The following is a 528-amino-acid chain: Tyrosine--tRNA ligase, cytoplasmic (528 aa).

Position 1 is an N-acetylmethionine (Met-1). N-acetylglycine; in Tyrosine--tRNA ligase, cytoplasmic, N-terminally processed is present on Gly-2. Tyr-39 is a binding site for L-tyrosine. A trans-resveratrol-binding site is contributed by Tyr-39. Positions Thr-44–Tyr-52 match the 'HIGH' region motif. Residues Tyr-166, Gln-170, Asp-173, and Gln-188 each coordinate L-tyrosine. 2 residues coordinate trans-resveratrol: Gln-170 and Asp-173. Position 197 is an N6-acetyllysine (Lys-197). Ser-205 bears the Phosphoserine mark. The residue at position 206 (Lys-206) is an N6-acetyllysine. A 'KMSKS' region motif is present at residues Lys-222–Ser-226. The Nuclear localization signal motif lies at Lys-242–Lys-247. The segment at Ala-339–Ile-363 is disordered. One can recognise a tRNA-binding domain in the interval Ile-364–Phe-468. Ser-386 carries the post-translational modification Phosphoserine. Lys-474, Lys-482, and Lys-490 each carry N6-acetyllysine.

It belongs to the class-I aminoacyl-tRNA synthetase family. As to quaternary structure, homodimer. Interacts (when binding to resveratrol) with PARP1; interaction stimulates the poly-ADP-ribosyltransferase activity of PARP1.

It is found in the cytoplasm. The protein resides in the nucleus. The enzyme catalyses tRNA(Tyr) + L-tyrosine + ATP = L-tyrosyl-tRNA(Tyr) + AMP + diphosphate + H(+). Its activity is regulated as follows. Resveratrol strongly inhibits the tyrosine--tRNA ligase activity. Tyrosine--tRNA ligase that catalyzes the attachment of tyrosine to tRNA(Tyr) in a two-step reaction: tyrosine is first activated by ATP to form Tyr-AMP and then transferred to the acceptor end of tRNA(Tyr). Also acts as a positive regulator of poly-ADP-ribosylation in the nucleus, independently of its tyrosine--tRNA ligase activity. Activity is switched upon resveratrol-binding: resveratrol strongly inhibits the tyrosine--tRNA ligase activity and promotes relocalization to the nucleus, where YARS1 specifically stimulates the poly-ADP-ribosyltransferase activity of PARP1. The chain is Tyrosine--tRNA ligase, cytoplasmic (Yars1) from Rattus norvegicus (Rat).